A 392-amino-acid polypeptide reads, in one-letter code: Cellobiose 2-epimerase (392 aa).

It belongs to the cellobiose 2-epimerase family.

The enzyme catalyses D-cellobiose = beta-D-glucosyl-(1-&gt;4)-D-mannopyranose. Its function is as follows. Catalyzes the reversible epimerization of cellobiose to 4-O-beta-D-glucopyranosyl-D-mannose (Glc-Man). Can also epimerize cellotriose to Glc-Glc-Man, cellotetraose to Glc-Glc-Glc-Man, lactose to epilactose, and mannobiose to 4-O-beta-D-mannopyranosyl-D-glucopyranose (Man-Glc). May function as a mannobiose 2-epimerase in vivo and be involved in a mannan catabolic pathway which feeds into glycolysis. This chain is Cellobiose 2-epimerase (bfce), found in Bacteroides fragilis (strain ATCC 25285 / DSM 2151 / CCUG 4856 / JCM 11019 / LMG 10263 / NCTC 9343 / Onslow / VPI 2553 / EN-2).